The chain runs to 144 residues: Transcriptional regulator MraZ (144 aa).

SpoVT-AbrB domains are found at residues 5–47 and 76–119; these read EYDH…TLDE and AVEV…DRET.

This sequence belongs to the MraZ family. Forms oligomers.

It localises to the cytoplasm. Its subcellular location is the nucleoid. This is Transcriptional regulator MraZ from Staphylococcus aureus.